The chain runs to 546 residues: CTP synthase (546 aa).

The interval 1–269 (MRSKKTKFIF…DERLAEVLNI (269 aa)) is amidoligase domain. Serine 17 is a CTP binding site. Serine 17 is a UTP binding site. Residues 18–23 (SLGKGL) and aspartate 75 each bind ATP. Mg(2+)-binding residues include aspartate 75 and glutamate 143. CTP is bound by residues 150–152 (DIE), 190–195 (KTKPTQ), and lysine 226. Residues 190-195 (KTKPTQ) and lysine 226 each bind UTP. Positions 295-537 (RIAIVGKYVN…IRAALAQRDA (243 aa)) constitute a Glutamine amidotransferase type-1 domain. Residue glycine 357 participates in L-glutamine binding. Cysteine 384 acts as the Nucleophile; for glutamine hydrolysis in catalysis. Residues 385–388 (LGLQ), glutamate 408, and arginine 465 each bind L-glutamine. Catalysis depends on residues histidine 510 and glutamate 512.

The protein belongs to the CTP synthase family. Homotetramer.

It catalyses the reaction UTP + L-glutamine + ATP + H2O = CTP + L-glutamate + ADP + phosphate + 2 H(+). The catalysed reaction is L-glutamine + H2O = L-glutamate + NH4(+). The enzyme catalyses UTP + NH4(+) + ATP = CTP + ADP + phosphate + 2 H(+). It functions in the pathway pyrimidine metabolism; CTP biosynthesis via de novo pathway; CTP from UDP: step 2/2. Allosterically activated by GTP, when glutamine is the substrate; GTP has no effect on the reaction when ammonia is the substrate. The allosteric effector GTP functions by stabilizing the protein conformation that binds the tetrahedral intermediate(s) formed during glutamine hydrolysis. Inhibited by the product CTP, via allosteric rather than competitive inhibition. Catalyzes the ATP-dependent amination of UTP to CTP with either L-glutamine or ammonia as the source of nitrogen. Regulates intracellular CTP levels through interactions with the four ribonucleotide triphosphates. This is CTP synthase from Myxococcus xanthus (strain DK1622).